Reading from the N-terminus, the 169-residue chain is NAD(P)H-quinone oxidoreductase subunit J, chloroplastic (169 aa).

This sequence belongs to the complex I 30 kDa subunit family. NDH is composed of at least 16 different subunits, 5 of which are encoded in the nucleus.

The protein localises to the plastid. It localises to the chloroplast thylakoid membrane. The enzyme catalyses a plastoquinone + NADH + (n+1) H(+)(in) = a plastoquinol + NAD(+) + n H(+)(out). It carries out the reaction a plastoquinone + NADPH + (n+1) H(+)(in) = a plastoquinol + NADP(+) + n H(+)(out). Functionally, NDH shuttles electrons from NAD(P)H:plastoquinone, via FMN and iron-sulfur (Fe-S) centers, to quinones in the photosynthetic chain and possibly in a chloroplast respiratory chain. The immediate electron acceptor for the enzyme in this species is believed to be plastoquinone. Couples the redox reaction to proton translocation, and thus conserves the redox energy in a proton gradient. The protein is NAD(P)H-quinone oxidoreductase subunit J, chloroplastic of Staurastrum punctulatum (Green alga).